The sequence spans 447 residues: Multicopper oxidase mco (447 aa).

Over residues 1–25 (MMNMKEDKKNTMDMKNMKHHDERKK) the composition is skewed to basic and acidic residues. Positions 1-28 (MMNMKEDKKNTMDMKNMKHHDERKKLNS) are disordered. Cu cation-binding residues include His-107, His-109, His-147, His-149, His-375, His-378, His-380, His-428, Cys-429, His-430, His-434, and Met-439.

Belongs to the multicopper oxidase family. The cofactor is Cu cation.

The protein resides in the cytoplasm. In terms of biological role, may be involved in copper homeostasis and oxidative stress response. The polypeptide is Multicopper oxidase mco (mco) (Staphylococcus epidermidis (strain ATCC 12228 / FDA PCI 1200)).